The chain runs to 333 residues: MEGEKLNLDNIISRLLEVRGSKPGKNVQLTESEIKGLCQKSREIFLSQPILLELEAPLKICGDVHGQYYDLLRLFEYGGFPPESNYLFLGDYVDRGKQSLETICLLLAYKIKYPENFFLLRGNHECASINRIYGFYDECKRRYNIKLWKTFTDCFNCLPVAAIIDEKIFCCHGGLSPDLQSMEQIRRIMRPTDVPDQGLLCDLLWSDPDKDVTGWGENDRGVSFTFGPEVVAKFLHKHDLDLICRAHQVVEDGYEFFAKRQLVTLFSAPNYCGEFDNAGSMMTVDETLMCSFQILKPADKKKYPYGAGGVGSNRPVTPPRNAPAAQPKKGAKK.

4 residues coordinate Mn(2+): aspartate 63, histidine 65, aspartate 91, and asparagine 123. Histidine 124 (proton donor) is an active-site residue. The Mn(2+) site is built by histidine 172 and histidine 247. Residues 306-333 (GAGGVGSNRPVTPPRNAPAAQPKKGAKK) form a disordered region. The span at 322–333 (APAAQPKKGAKK) shows a compositional bias: low complexity.

The protein belongs to the PPP phosphatase family. PP-1 subfamily. Interacts with lab-1; the interaction is direct. Interacts with knl-1; the interaction is direct. The cofactor is Mn(2+).

It localises to the cytoplasm. The protein resides in the nucleus. It catalyses the reaction O-phospho-L-seryl-[protein] + H2O = L-seryl-[protein] + phosphate. The enzyme catalyses O-phospho-L-threonyl-[protein] + H2O = L-threonyl-[protein] + phosphate. Functionally, serine/threonine-protein phosphatase essential for chromosomal dynamics during meiosis and mitosis. Antagonizes the function of air-2 in the regulation of chromosome cohesion. Dephosphorylates histone H3 at 'Ser-10'. Also involved in the activation of chloride channel clh-3 during cell swelling and meiotic maturation. Essential for embryogenesis. The polypeptide is Serine/threonine-protein phosphatase PP1-beta (gsp-2) (Caenorhabditis briggsae).